Consider the following 691-residue polypeptide: MGQALSIKSCDFHAAENNEEHYTKAISSQHLTLRRGQSFTITLNFRAPTHTFLSALKKVALIAQTGEQPSKINKTQAIFPISSLGDQKGWSAAVEERDAQHWTVSVTTPVDAVIGHYSLLLQVSGKKQYPLGQFTLLFNPWNRDDAVFLQNEAERTEYVLNQNGFIYLGTADCIQEEPWDFGQFEKDVMDLSLKLLSMDKQVKDWNQPAHVARVVGALLHALKKKSVLPISQTQAAQEGALLYKRRGSVPILRQWLTGQGRAVYETQAWVSAAVACTVLRCLGIPARVVTTFDSAQGTVGSLLVDEYYNEEGLQNGEGQRGHIWVFQTSVECWMNRPDLSQGYGGWQILHPRAPNGAGVLGSCSLVPVRAVKEGELQLDPAVPELFAAVNASCVVWKCCEDGKLELTNSNRKDVGNCISTKVVGSDRCEDITQNYKYPAGSLQEKEVLEKVQKERLKLGKDNGMCPPSCEPWDPLHMFFEASSSIPLSGDGQLSVTLINPTDEEKKVHLVIGAQALYYNGVLAAGLWSKKQLFMLKPNQVMRLSTNLSFSCFEQTPPENSFLRVTAMARYSHTSLSCFAQENMAIGKPDLIIEMPKRAAQYRPLTVSVRMHNSLEAPMQNCIISIFGRGLIHREKRYGLGSLWPGSSLHTQFQFTPTHLGLQRLTVEVDCDMFQNLTGYRSVLVVAPEVSV.

A lipid anchor (N-myristoyl glycine) is attached at glycine 2. The tract at residues 31–39 (LTLRRGQSF) is band 3 binding. A Phosphoserine modification is found at serine 248. Phosphotyrosine is present on tyrosine 570.

The protein belongs to the transglutaminase superfamily. Transglutaminase family. As to quaternary structure, component of the ankyrin-1 complex in the erythrocyte, composed of ANK1, RHCE, RHAG, SLC4A1, EPB42, GYPA, GYPB and AQP1. Interacts with SLC4A1 (via the cytoplasmic domain); this interaction is mediated by the SLC4A1 Band 3-I dimer. Interacts with ANK1 (via ANK 1-13 repeats). Interacts with AQP1 (via the C-terminal).

The protein resides in the cell membrane. It localises to the cytoplasm. Its subcellular location is the cytoskeleton. In terms of biological role, component of the ankyrin-1 complex, a multiprotein complex involved in the stability and shape of the erythrocyte membrane. The chain is Protein 4.2 from Mus musculus (Mouse).